The following is a 360-amino-acid chain: Phospho-N-acetylmuramoyl-pentapeptide-transferase (360 aa).

A run of 10 helical transmembrane segments spans residues 2-22 (IAILVSGAVGLLVSLFGTPLF), 52-72 (MGGVVIIAATVLGYTVANISA), 80-100 (GLLLLFLMIGLGVIGFLDDFI), 114-134 (WKIIGQGVIGVTFSVLALQFP), 156-176 (LAFAGAAVGLVLFVIWANFLI), 189-209 (LDGLATGVSVFVFSAYVVVTM), 235-255 (LAIVTAAIVGACAGFLWWNAS), 259-279 (IFMGDTGALALGGALAGLSIL), 284-304 (FLAVIIGGLFVVIVLSDVIQI), and 338-358 (FWLIAALFVALGVGIFYAEWV).

The protein belongs to the glycosyltransferase 4 family. MraY subfamily. It depends on Mg(2+) as a cofactor.

It localises to the cell membrane. It catalyses the reaction UDP-N-acetyl-alpha-D-muramoyl-L-alanyl-gamma-D-glutamyl-meso-2,6-diaminopimeloyl-D-alanyl-D-alanine + di-trans,octa-cis-undecaprenyl phosphate = di-trans,octa-cis-undecaprenyl diphospho-N-acetyl-alpha-D-muramoyl-L-alanyl-D-glutamyl-meso-2,6-diaminopimeloyl-D-alanyl-D-alanine + UMP. It participates in cell wall biogenesis; peptidoglycan biosynthesis. Functionally, catalyzes the initial step of the lipid cycle reactions in the biosynthesis of the cell wall peptidoglycan: transfers peptidoglycan precursor phospho-MurNAc-pentapeptide from UDP-MurNAc-pentapeptide onto the lipid carrier undecaprenyl phosphate, yielding undecaprenyl-pyrophosphoryl-MurNAc-pentapeptide, known as lipid I. This chain is Phospho-N-acetylmuramoyl-pentapeptide-transferase, found in Beutenbergia cavernae (strain ATCC BAA-8 / DSM 12333 / CCUG 43141 / JCM 11478 / NBRC 16432 / NCIMB 13614 / HKI 0122).